The chain runs to 212 residues: GTP-binding protein EngB (212 aa).

Positions 36–212 constitute an EngB-type G domain; sequence TAPEVAFAGR…LRAAVYDAII (177 aa). Residues 44 to 51, 71 to 75, 91 to 94, 158 to 161, and 192 to 194 contribute to the GTP site; these read GRSNVGKS, GRTQE, DMPG, TKSD, and TSS. Residues Ser51 and Thr73 each coordinate Mg(2+).

Belongs to the TRAFAC class TrmE-Era-EngA-EngB-Septin-like GTPase superfamily. EngB GTPase family. Mg(2+) is required as a cofactor.

Necessary for normal cell division and for the maintenance of normal septation. The chain is GTP-binding protein EngB from Zymomonas mobilis subsp. mobilis (strain ATCC 31821 / ZM4 / CP4).